The sequence spans 281 residues: NAD-dependent protein deacetylase 3 (281 aa).

A Deacetylase sirtuin-type domain is found at methionine 1 to arginine 281. NAD(+) contacts are provided by residues glycine 27–arginine 47 and glutamine 105–aspartate 108. Histidine 123 (proton acceptor) is an active-site residue. 4 residues coordinate Zn(2+): cysteine 131, cysteine 134, cysteine 182, and cysteine 185. Residues glycine 223 to serine 225, asparagine 249 to glycine 251, and cysteine 267 contribute to the NAD(+) site.

The protein belongs to the sirtuin family. Class II subfamily. Zn(2+) serves as cofactor.

It is found in the cytoplasm. The enzyme catalyses N(6)-acetyl-L-lysyl-[protein] + NAD(+) + H2O = 2''-O-acetyl-ADP-D-ribose + nicotinamide + L-lysyl-[protein]. Its function is as follows. NAD-dependent protein deacetylase which modulates the activities of several enzymes which are inactive in their acetylated form. The protein is NAD-dependent protein deacetylase 3 of Pseudomonas syringae pv. tomato (strain ATCC BAA-871 / DC3000).